An 862-amino-acid polypeptide reads, in one-letter code: MQRAALFGGGDAQMAAGDLGELLVPYMPTIRVPKSGDRVYKTECAFSYDSPDSEGGLYVCMNTFLGFGREHIERHYRKTGQCVYLHLKRHVIEKVPGASGGALPKRRNAKLFLDLEANGDLSSDDFEYEDEAKLVIFPDHYEISLPNIEELPALVTIASDALLSAKSPYRKQDPDSWEEELQASKHAKSLVQLDNGVRIPPSGWKCSKCDLRENLWLNLTDGSVLCGKWFFDGSGGNGHAMEHYKETGYPLAVKLGTITPDGADVYSFDEEEPVLDPHIAKHLAHFGIDMLQMQVAENGLRDNDIKPRVSEWEVIQEAGVKLKPMYGPGYTGMKNLGNSCYLNAVMQAIFSIPEFQRAYVGNLPRIFDYSPLDPTQDFNTQMAKLGHGLLSGQYSKPPMKSELIEQVMKEEHKPQQNGISPQMFKAFISKDHTEFSSNRQQDAQEFFLHLINLVERNPVGSENPSDVFRFLVEERTQCCQSRKVRYTERVDYIMQLPVAMEAATNKDELIAYELKRREAEAARRAPPELVRAKIPFSACLQAFSEPTNVEDFWSSALQAKSAGVKTSRFASFPQYLVVQIKKFTFGLDWIPKKLDVSIDMPDFLDISHLRAMGLQPGEEELPDIAPPIIIPEDPKDRMMNNFVESLDIDESSVMQLAEMGFPLEACRKAVYYTGNLGAEVAFNWIIAHMEEPDFAEPLVVPVFGGAASSGVAGLGAVGLDNQPPEEMVSIIISMGFQRSLAIQALKATNNNLERALEWIFSHPELEEEDGEPALNVMDLENHTNANILAEARSEGPRIKDGPGRYELFGFISHMGTSTMSGHYVCHLKKEGRWVIYNDLRVCASERPPKDLGYIYFYHRIPS.

The UBP-type; degenerate zinc finger occupies 182 to 290 (QASKHAKSLV…KHLAHFGIDM (109 aa)). Cys206, Cys209, Cys226, and His239 together coordinate Zn(2+). A USP domain is found at 331 to 860 (TGMKNLGNSC…LGYIYFYHRI (530 aa)). The active-site Nucleophile is the Cys340. UBA domains lie at 647–688 (DIDE…IIAH) and 722–762 (QPPE…IFSH). The Proton acceptor role is filled by His822.

Belongs to the peptidase C19 family.

It catalyses the reaction Thiol-dependent hydrolysis of ester, thioester, amide, peptide and isopeptide bonds formed by the C-terminal Gly of ubiquitin (a 76-residue protein attached to proteins as an intracellular targeting signal).. Its activity is regulated as follows. Specifically inhibited by spautin-1 (specific and potent autophagy inhibitor-1), a derivative of MBCQ that binds to USP13 and inhibits deubiquitinase activity. Its function is as follows. Deubiquitinase that mediates deubiquitination of target proteins and is involved in various processes such as autophagy and endoplasmic reticulum-associated degradation (ERAD). In Gallus gallus (Chicken), this protein is Ubiquitin carboxyl-terminal hydrolase 13 (USP13).